The chain runs to 229 residues: Orotidine 5'-phosphate decarboxylase (229 aa).

Substrate contacts are provided by residues Asp12, Lys34, 61 to 70 (DWKLHDIGAT), Thr116, Arg177, Gln186, Gly206, and Arg207. Lys63 acts as the Proton donor in catalysis.

Belongs to the OMP decarboxylase family. Type 1 subfamily. Homodimer.

The catalysed reaction is orotidine 5'-phosphate + H(+) = UMP + CO2. It participates in pyrimidine metabolism; UMP biosynthesis via de novo pathway; UMP from orotate: step 2/2. Its function is as follows. Catalyzes the decarboxylation of orotidine 5'-monophosphate (OMP) to uridine 5'-monophosphate (UMP). This Caulobacter sp. (strain K31) protein is Orotidine 5'-phosphate decarboxylase.